A 173-amino-acid chain; its full sequence is Ribosomal RNA large subunit methyltransferase H (173 aa).

S-adenosyl-L-methionine is bound by residues L89 and G121.

Belongs to the RNA methyltransferase RlmH family. As to quaternary structure, homodimer.

It localises to the cytoplasm. The enzyme catalyses pseudouridine(1915) in 23S rRNA + S-adenosyl-L-methionine = N(3)-methylpseudouridine(1915) in 23S rRNA + S-adenosyl-L-homocysteine + H(+). Specifically methylates the pseudouridine at position 1915 (m3Psi1915) in 23S rRNA. The chain is Ribosomal RNA large subunit methyltransferase H from Chelativorans sp. (strain BNC1).